The primary structure comprises 216 residues: Peptide methionine sulfoxide reductase MsrA (216 aa).

Cysteine 54 is a catalytic residue.

This sequence belongs to the MsrA Met sulfoxide reductase family.

The catalysed reaction is L-methionyl-[protein] + [thioredoxin]-disulfide + H2O = L-methionyl-(S)-S-oxide-[protein] + [thioredoxin]-dithiol. The enzyme catalyses [thioredoxin]-disulfide + L-methionine + H2O = L-methionine (S)-S-oxide + [thioredoxin]-dithiol. Its function is as follows. Has an important function as a repair enzyme for proteins that have been inactivated by oxidation. Catalyzes the reversible oxidation-reduction of methionine sulfoxide in proteins to methionine. The sequence is that of Peptide methionine sulfoxide reductase MsrA from Xanthomonas campestris pv. campestris (strain 8004).